The primary structure comprises 353 residues: Uroporphyrinogen decarboxylase (353 aa).

Substrate-binding positions include 27–31, phenylalanine 46, aspartate 76, tyrosine 152, serine 207, and histidine 321; that span reads RQAGR.

The protein belongs to the uroporphyrinogen decarboxylase family. In terms of assembly, homodimer.

The protein resides in the cytoplasm. It catalyses the reaction uroporphyrinogen III + 4 H(+) = coproporphyrinogen III + 4 CO2. Its pathway is porphyrin-containing compound metabolism; protoporphyrin-IX biosynthesis; coproporphyrinogen-III from 5-aminolevulinate: step 4/4. Catalyzes the decarboxylation of four acetate groups of uroporphyrinogen-III to yield coproporphyrinogen-III. The chain is Uroporphyrinogen decarboxylase from Listeria monocytogenes serotype 4b (strain CLIP80459).